Here is a 104-residue protein sequence, read N- to C-terminus: Pyrimidine/purine nucleoside phosphorylase (104 aa).

The protein belongs to the nucleoside phosphorylase PpnP family.

The enzyme catalyses a purine D-ribonucleoside + phosphate = a purine nucleobase + alpha-D-ribose 1-phosphate. It catalyses the reaction adenosine + phosphate = alpha-D-ribose 1-phosphate + adenine. It carries out the reaction cytidine + phosphate = cytosine + alpha-D-ribose 1-phosphate. The catalysed reaction is guanosine + phosphate = alpha-D-ribose 1-phosphate + guanine. The enzyme catalyses inosine + phosphate = alpha-D-ribose 1-phosphate + hypoxanthine. It catalyses the reaction thymidine + phosphate = 2-deoxy-alpha-D-ribose 1-phosphate + thymine. It carries out the reaction uridine + phosphate = alpha-D-ribose 1-phosphate + uracil. The catalysed reaction is xanthosine + phosphate = alpha-D-ribose 1-phosphate + xanthine. In terms of biological role, catalyzes the phosphorolysis of diverse nucleosides, yielding D-ribose 1-phosphate and the respective free bases. Can use uridine, adenosine, guanosine, cytidine, thymidine, inosine and xanthosine as substrates. Also catalyzes the reverse reactions. This is Pyrimidine/purine nucleoside phosphorylase from Geobacter sulfurreducens (strain ATCC 51573 / DSM 12127 / PCA).